We begin with the raw amino-acid sequence, 281 residues long: 4-deoxy-L-threo-5-hexosulose-uronate ketol-isomerase (281 aa).

Residues H198, H200, E205, and H248 each contribute to the Zn(2+) site.

The protein belongs to the KduI family. Requires Zn(2+) as cofactor.

It catalyses the reaction 5-dehydro-4-deoxy-D-glucuronate = 3-deoxy-D-glycero-2,5-hexodiulosonate. The protein operates within glycan metabolism; pectin degradation; 2-dehydro-3-deoxy-D-gluconate from pectin: step 4/5. In terms of biological role, catalyzes the isomerization of 5-dehydro-4-deoxy-D-glucuronate to 3-deoxy-D-glycero-2,5-hexodiulosonate. This is 4-deoxy-L-threo-5-hexosulose-uronate ketol-isomerase from Lacticaseibacillus casei (strain BL23) (Lactobacillus casei).